A 1019-amino-acid polypeptide reads, in one-letter code: Pleckstrin homology domain-containing family M member 2 (1019 aa).

Position 1 is an N-acetylmethionine (Met1). The tract at residues 1–310 (MEPGEVKDRI…LDPPDACTEL (310 aa)) is interaction with KIF5B. In terms of domain architecture, RUN spans 36 to 158 (RNHDKVLQRL…IRFELDLDAP (123 aa)). Disordered stretches follow at residues 230–458 (SVPS…SEGL), 471–525 (SPST…REAQ), and 557–581 (QPSPCLSSAEDSGVDEGQGSPSEMV). Composition is skewed to polar residues over residues 243–272 (DTVSGPRSTASDLTSSKASTRSPTQRQNPF) and 279–291 (TVSSSDTTPVHTT). The segment covering 315-327 (VTKKKKIGKKKKS) has biased composition (basic residues). Over residues 417–427 (LNGQLDPSTWC) the composition is skewed to polar residues. Position 441 is a phosphoserine (Ser441). Positions 516 to 525 (PLEDTTREAQ) are enriched in basic and acidic residues. An interaction with sifA region spans residues 762–885 (PCHCSPPEGT…VIPQGVAPSP (124 aa)). The 103-residue stretch at 771–873 (TITKEGMLHY…WMQHLCQAVS (103 aa)) folds into the PH domain.

Interacts with KLC2 (via TPR repeats). Interacts with KIF5B. Interacts with BORCS5. Interacts (via RUN domain) with ARL8B (GTP-bound form); PLEKHM1 and PLEKHM2 compete for interaction with ARL8B. Interacts with ARL8A. As to quaternary structure, (Microbial infection) Interacts with the S.typhimurium sifA protein; required for S.typhimurium infection.

The protein localises to the cytoplasm. It localises to the lysosome membrane. Functionally, plays a role in lysosomes movement and localization at the cell periphery acting as an effector of ARL8B. Required for ARL8B to exert its effects on lysosome location, recruits kinesin-1 to lysosomes and hence direct their movement toward microtubule plus ends. Binding to ARL8B provides a link from lysosomal membranes to plus-end-directed motility. Critical factor involved in NK cell-mediated cytotoxicity. Drives the polarization of cytolytic granules and microtubule-organizing centers (MTOCs) toward the immune synapse between effector NK lymphocytes and target cells. Required for maintenance of the Golgi apparatus organization. May play a role in membrane tubulation. The protein is Pleckstrin homology domain-containing family M member 2 of Homo sapiens (Human).